The primary structure comprises 327 residues: GMP reductase (327 aa).

The active-site Thioimidate intermediate is the C175. I204 to V227 contacts NADP(+).

It belongs to the IMPDH/GMPR family. GuaC type 2 subfamily.

It catalyses the reaction IMP + NH4(+) + NADP(+) = GMP + NADPH + 2 H(+). Functionally, catalyzes the irreversible NADPH-dependent deamination of GMP to IMP. It functions in the conversion of nucleobase, nucleoside and nucleotide derivatives of G to A nucleotides, and in maintaining the intracellular balance of A and G nucleotides. This chain is GMP reductase, found in Clostridium acetobutylicum (strain ATCC 824 / DSM 792 / JCM 1419 / IAM 19013 / LMG 5710 / NBRC 13948 / NRRL B-527 / VKM B-1787 / 2291 / W).